A 666-amino-acid chain; its full sequence is Probable potassium transport system protein Kup (666 aa).

A run of 12 helical transmembrane segments spans residues 16-36, 58-78, 100-120, 141-161, 165-185, 221-241, 253-273, 294-314, 343-363, 373-393, 399-419, and 424-444; these read GFIIALGIVYGDIGTSPLYTM, ISLIIWTLTLITTIKYVLIAL, PWLIIPAMIGGATLLSDGALT, IYQNQTNIIITTLVILIVLFG, FGTGFIGKIFGPVMFIWFSFL, IFILGSIFLATTGAEALYSDL, WPFVKMCIVWSYCGQAAWILA, VYLVSLATLAAIIASQALISG, LYIPVINWILFAVTSCTVLAF, YGLAITITMLMTTILLKYYLI, PILAHLAMAFFALVEFIFFLA, and FMHGGYAVVILALAIVFVMFI.

Belongs to the HAK/KUP transporter (TC 2.A.72) family.

The protein resides in the cell membrane. The catalysed reaction is K(+)(in) + H(+)(in) = K(+)(out) + H(+)(out). In terms of biological role, transport of potassium into the cell. Likely operates as a K(+):H(+) symporter. The polypeptide is Probable potassium transport system protein Kup (Streptococcus pyogenes serotype M4 (strain MGAS10750)).